The following is an 854-amino-acid chain: Patatin-like phospholipase domain-containing protein CHGG_02900 (854 aa).

Disordered regions lie at residues Met1–Pro29, Leu58–Ser138, and Gln159–Asp186. A compositionally biased stretch (basic and acidic residues) spans Asp96–Arg116. Low complexity predominate over residues Pro119 to Thr132. The chain crosses the membrane as a helical span at residues Trp199–Ala219. The PNPLA domain occupies Leu387–Asn578. The GXSXG motif lies at Gly418–Gly422. Ser420 functions as the Nucleophile in the catalytic mechanism. Asp565 serves as the catalytic Proton acceptor. 2 disordered regions span residues Arg724 to Ser776 and Arg791 to Gly830. The span at Gly729–Gln751 shows a compositional bias: gly residues. The span at Ala752–Gly761 shows a compositional bias: low complexity. Residues Thr799–Phe812 are compositionally biased toward acidic residues.

The protein belongs to the PLPL family.

The protein resides in the membrane. Probable lipid hydrolase. In Chaetomium globosum (strain ATCC 6205 / CBS 148.51 / DSM 1962 / NBRC 6347 / NRRL 1970) (Soil fungus), this protein is Patatin-like phospholipase domain-containing protein CHGG_02900.